The sequence spans 262 residues: MAPIVETAKETNSDSSLYLDLMIKVLAGTVYEDPAHRENFSHRDSTYREEVRNEGRDWPANAHTMIGIKRLENIRQCVEDVIGNNVPGDLVETGVWRGGACILMRGILRAHDVRDRTVWVADSFQGIPDVGEDGYAGDRKMALHRRNSVLAVSEEEVRRNFRNYDLLDEQVRFLPGWFKDTLPTAPIDTLAVLRMDGDLYESTWDTLTNLYPKVSVGGYVIVDDYMMCPPCKDAVDEYRAKFDIADELITIDRDGVYWQRTR.

64 to 65 (TM) provides a ligand contact to S-adenosyl-L-methionine. The active-site Proton acceptor is E72. S-adenosyl-L-methionine is bound by residues 92–96 (ETGVW), 122–126 (DSFQG), F178, 196–197 (DG), and S202. D196 is a binding site for Mg(2+). Mg(2+) contacts are provided by D223 and D224.

This sequence belongs to the methyltransferase TylF/MycF family. Homodimer. The cofactor is Mg(2+).

It carries out the reaction desmethyldescarbamoylnovobiocin + S-adenosyl-L-methionine = descarbamoylnovobiocin + S-adenosyl-L-homocysteine + H(+). Its pathway is antibiotic biosynthesis; novobiocin biosynthesis. Functionally, S-adenosyl-L-methionine-dependent O-methyltransferase that methylates at 4-OH of the noviose moiety, the penultimate step in the novobiocin biosynthesis pathway. Novobiocin is an aminocoumarin family antibiotic that targets bacterial DNA gyrases. The protein is Demethyldecarbamoylnovobiocin O-methyltransferase (novP) of Streptomyces niveus (Streptomyces spheroides).